We begin with the raw amino-acid sequence, 340 residues long: N-acetyl-gamma-glutamyl-phosphate reductase (340 aa).

The active site involves Cys-146.

The protein belongs to the NAGSA dehydrogenase family. Type 1 subfamily.

The protein resides in the cytoplasm. The catalysed reaction is N-acetyl-L-glutamate 5-semialdehyde + phosphate + NADP(+) = N-acetyl-L-glutamyl 5-phosphate + NADPH + H(+). It participates in amino-acid biosynthesis; L-arginine biosynthesis; N(2)-acetyl-L-ornithine from L-glutamate: step 3/4. Its function is as follows. Catalyzes the NADPH-dependent reduction of N-acetyl-5-glutamyl phosphate to yield N-acetyl-L-glutamate 5-semialdehyde. The sequence is that of N-acetyl-gamma-glutamyl-phosphate reductase from Streptococcus thermophilus (strain ATCC BAA-491 / LMD-9).